The following is a 124-amino-acid chain: Glutaredoxin-2 (124 aa).

Residues Cys-13 and Cys-16 are joined by a disulfide bond.

It belongs to the glutaredoxin family. In terms of assembly, homodimer.

Its subcellular location is the host cytoplasm. In terms of biological role, glutaredoxin necessary for virion morphogenesis and virus replication. Functions as a thiol-disulfide transfer protein between membrane-associated OPG128 and substrates OPG095 or OPG053. The complete pathway for formation of disulfide bonds in intracellular virion membrane proteins sequentially involves oxidation of OPG072, OPG128 and OPG088. Exhibit thioltransferase and dehydroascorbate reductase activities in vitro. The protein is Glutaredoxin-2 (OPG088) of Oryctolagus cuniculus (Rabbit).